The following is a 330-amino-acid chain: Putative glycosyltransferase HI_0258 (330 aa).

The span at 1–31 (MTDRQTDRQTDRQTDRQTDRQTDRQTDRQTD) shows a compositional bias: basic and acidic residues. Residues 1-32 (MTDRQTDRQTDRQTDRQTDRQTDRQTDRQTDG) form a disordered region. UDP contacts are provided by residues 44–49 (SSDHYY) and 140–141 (DV). 3 residues coordinate Mn(2+): aspartate 140, aspartate 142, and histidine 270. A UDP-binding site is contributed by 270 to 276 (HYCGPNK).

The protein belongs to the glycosyltransferase 8 family.

The chain is Putative glycosyltransferase HI_0258 from Haemophilus influenzae (strain ATCC 51907 / DSM 11121 / KW20 / Rd).